Here is a 385-residue protein sequence, read N- to C-terminus: MPHTKKILVIGASIAGPALCYWLNHYGFQPTLVEKNQSTRKGGYAIDLRGIAVDVAKQMGIYDSVCAMRTSLQCVRYVDAAGNLLFEEHGEKGGFRQGDEVEIVRGDLVDILMKTITDIPCFYDHAIESLTQHDDHVTVQFKNGKTENYDLVIAADGLHSATRRMVFSKDDYHLRNLGCYISVFSIPNYLQLDHCETLLEAKQKLVSITSDKDSTKAFAGFMFRSSNSPNYIRDEASQKDFLRENFTNHGWESNKLLSLMNDANDFYFDAIMQVKMKDWTKGRIALVGDAGYTPSPLSGQGTSLALVGAYILAGELKTATDHVAAFARYNELLKPYVEANQAFGVWVSESFLADEPLSAEQAEERNNIVLGIMKKATHAIELPEY.

FAD-binding positions include 12–15 (ASIA), 34–36 (EKN), 44–47 (YAID), R105, Y267, D289, and 296–302 (PLSGQGT).

Belongs to the aromatic-ring hydroxylase family. It depends on FAD as a cofactor.

It catalyses the reaction 7-chlorotetracycline + NADPH + O2 + H(+) = (1S,10S,10aS)-3-(CONH2)-9-Cl-1-(Me2N)-3,3a,4,10-(HO)4-10-Me-2,5-dioxo-1H,10aH,11H,11aH-cyclopenta[b]anthracen-6-olate + CO + NADP(+) + H2O. The enzyme catalyses a tetracycline + NADPH + O2 + H(+) = a (1S,10aS)-3-(CONH2)-1-(Me2N)-3,3a,4,6-(HO)4-2,5-dioxo-1H,10aH,11H,11aH-cyclopenta[b]anthracene + CO + NADP(+) + H2O. With respect to regulation, inhibited by anhydrotetracycline. In terms of biological role, an FAD-requiring monooxygenase active on tetracycline antibiotic and some of its derivatives, which leads to their inactivation. Expression in E.coli confers high resistance to oxytetracycline, slightly less resistance to tetracycline, moderate resistance to minocycline but no resistance to tigecycline. Degrades tetracycline and oxytetracycline; the reaction requires NADPH. Degrades and confers resistance to chlortetracycline. This Unknown prokaryotic organism protein is Flavin-dependent monooxygenase.